The sequence spans 396 residues: Elongation factor Tu (396 aa).

A tr-type G domain is found at 10-206; sequence KPHVNVGTIG…TMDSYIPEPV (197 aa). The segment at 19–26 is G1; the sequence is GHVDHGKT. Residue 19-26 participates in GTP binding; sequence GHVDHGKT. Thr26 contacts Mg(2+). Residues 60–64 form a G2 region; it reads GITIS. The tract at residues 81 to 84 is G3; that stretch reads DCPG. GTP is bound by residues 81-85 and 136-139; these read DCPGH and NKAD. Residues 136-139 form a G4 region; the sequence is NKAD. The interval 174–176 is G5; it reads SAL.

This sequence belongs to the TRAFAC class translation factor GTPase superfamily. Classic translation factor GTPase family. EF-Tu/EF-1A subfamily. As to quaternary structure, monomer.

Its subcellular location is the cytoplasm. The enzyme catalyses GTP + H2O = GDP + phosphate + H(+). Its function is as follows. GTP hydrolase that promotes the GTP-dependent binding of aminoacyl-tRNA to the A-site of ribosomes during protein biosynthesis. The sequence is that of Elongation factor Tu from Legionella pneumophila (strain Paris).